The chain runs to 296 residues: m7GpppN-mRNA hydrolase NUDT17 (296 aa).

Residues 90 to 236 form the Nudix hydrolase domain; it reads GRGVDVGVAV…DSGSPCGPLP (147 aa). Residues 129–150 carry the Nudix box motif; the sequence is GHVELGEQLLEAGLRELQEETG. Glu144 and Glu148 together coordinate Mg(2+).

Belongs to the Nudix hydrolase family. Requires Mg(2+) as cofactor. Mn(2+) serves as cofactor.

It carries out the reaction a 5'-end (N(7)-methyl 5'-triphosphoguanosine)-ribonucleoside in mRNA + H2O = N(7)-methyl-GDP + a 5'-end phospho-ribonucleoside in mRNA + 2 H(+). Functionally, acts as a decapping enzyme capable of hydrolyzing monomethylated capped RNAs (in vitro). Hydrolyzes monomethylated capped RNA after alpha and beta phosphates to form N(7)-methyl-GDP. Shows low activity towards unmethylated capped RNA. In Xenopus laevis (African clawed frog), this protein is m7GpppN-mRNA hydrolase NUDT17 (nudt17).